A 163-amino-acid chain; its full sequence is Cytochrome b6-f complex subunit 4 (163 aa).

3 consecutive transmembrane segments (helical) span residues 36–56 (LLYI…GLAV), 95–115 (LLGV…PFLE), and 131–151 (TVFL…TLPI).

Belongs to the cytochrome b family. PetD subfamily. As to quaternary structure, the 4 large subunits of the cytochrome b6-f complex are cytochrome b6, subunit IV (17 kDa polypeptide, petD), cytochrome f and the Rieske protein, while the 4 small subunits are petG, petL, petM and petN. The complex functions as a dimer.

The protein resides in the plastid. Its subcellular location is the chloroplast thylakoid membrane. Functionally, component of the cytochrome b6-f complex, which mediates electron transfer between photosystem II (PSII) and photosystem I (PSI), cyclic electron flow around PSI, and state transitions. This is Cytochrome b6-f complex subunit 4 from Pelargonium hortorum (Common geranium).